We begin with the raw amino-acid sequence, 129 residues long: MTLVVLATGLLASGTAVSNADQASELNVDVHSSNVLATEDTRFLRSHQITDDKVEINEHGEEERMSGSNLFSALKLEKMGRDTSYRDKEFQRWKNYGNSVGDVTPHVPVSLKEAYATYLRIREMVLVND.

Residues 1–16 (MTLVVLATGLLASGTA) form the signal peptide. Residues 42-64 (RFLRSHQITDDKVEINEHGEEER) carry the RxLR-dEER motif.

It belongs to the RxLR effector family.

Its subcellular location is the secreted. It is found in the host cytoplasm. It localises to the host cell membrane. In terms of biological role, effector that suppresses flg22-induced post-translational MAP kinase activation in tomato but not in Arabidopsis. The perception of highly conserved pathogen- or microbe-associated molecular patterns (PAMPs/MAMPs), such as flg22, triggers converging signaling pathways recruiting MAP kinase cascades and inducing transcriptional re-programming, yielding a generic antimicrobial response. The sequence is that of RxLR effector protein SFI6 from Phytophthora infestans (strain T30-4) (Potato late blight agent).